The following is a 293-amino-acid chain: Elongation factor Ts (293 aa).

Positions 81 to 84 (TDFV) are involved in Mg(2+) ion dislocation from EF-Tu.

The protein belongs to the EF-Ts family.

The protein resides in the cytoplasm. Functionally, associates with the EF-Tu.GDP complex and induces the exchange of GDP to GTP. It remains bound to the aminoacyl-tRNA.EF-Tu.GTP complex up to the GTP hydrolysis stage on the ribosome. This chain is Elongation factor Ts, found in Methylococcus capsulatus (strain ATCC 33009 / NCIMB 11132 / Bath).